The chain runs to 1403 residues: DNA-directed RNA polymerase subunit beta' (1403 aa).

Positions 69, 71, 84, and 87 each coordinate Zn(2+). 3 residues coordinate Mg(2+): aspartate 461, aspartate 463, and aspartate 465. Zn(2+)-binding residues include cysteine 818, cysteine 891, cysteine 898, and cysteine 901. Positions 1384–1403 (LELLRNEGEDETGNEELVAE) are disordered. A compositionally biased stretch (acidic residues) spans 1391 to 1403 (GEDETGNEELVAE).

It belongs to the RNA polymerase beta' chain family. As to quaternary structure, the RNAP catalytic core consists of 2 alpha, 1 beta, 1 beta' and 1 omega subunit. When a sigma factor is associated with the core the holoenzyme is formed, which can initiate transcription. Requires Mg(2+) as cofactor. The cofactor is Zn(2+).

It catalyses the reaction RNA(n) + a ribonucleoside 5'-triphosphate = RNA(n+1) + diphosphate. DNA-dependent RNA polymerase catalyzes the transcription of DNA into RNA using the four ribonucleoside triphosphates as substrates. The chain is DNA-directed RNA polymerase subunit beta' from Koribacter versatilis (strain Ellin345).